Reading from the N-terminus, the 82-residue chain is EMBRYO SURROUNDING FACTOR 1-like protein 10 (82 aa).

The signal sequence occupies residues 1 to 22; sequence MSSLYFAILCLFMIFLVPLHEF. Disulfide bonds link Cys-39–Cys-55, Cys-44–Cys-74, Cys-53–Cys-70, and Cys-56–Cys-63.

This sequence belongs to the MEG family. As to expression, expressed in stems, leaves and flowers.

This Arabidopsis thaliana (Mouse-ear cress) protein is EMBRYO SURROUNDING FACTOR 1-like protein 10 (ESFL10).